A 353-amino-acid polypeptide reads, in one-letter code: Phospho-furanose lactonase (353 aa).

Zn(2+) contacts are provided by H25, H27, K153, H186, and H214. K153 carries the post-translational modification N6-carboxylysine. A substrate-binding site is contributed by 244-245 (KY). A Zn(2+)-binding site is contributed by D272. 275 to 278 (RILY) contributes to the substrate binding site.

It belongs to the metallo-dependent hydrolases superfamily. Phosphotriesterase family. The cofactor is Zn(2+).

The enzyme catalyses a 1,4-lactone + H2O = a 4-hydroxyacid + H(+). It catalyses the reaction D-xylono-1,4-lactone 5-phosphate + H2O = 5-phospho-D-xylonate + H(+). It carries out the reaction L-arabino-1,4-lactone 5-phosphate + H2O = 5-phospho-L-arabinonate + H(+). In terms of biological role, catalyzes the hydrolysis of D-xylono-1,4-lactone-5-phosphate and L-arabino-1,4-lactone-5-phosphate. Also able to hydrolyze carboxy 1,4-lactones. The protein is Phospho-furanose lactonase of Mycoplasmopsis agalactiae (strain NCTC 10123 / CIP 59.7 / PG2) (Mycoplasma agalactiae).